Reading from the N-terminus, the 124-residue chain is Small ribosomal subunit protein uS12 (124 aa).

The residue at position 89 (aspartate 89) is a 3-methylthioaspartic acid. The tract at residues 105 to 124 is disordered; sequence AGVKDRRQSRSKYGAKRPKA. Basic residues predominate over residues 113-124; it reads SRSKYGAKRPKA.

Belongs to the universal ribosomal protein uS12 family. As to quaternary structure, part of the 30S ribosomal subunit. Contacts proteins S8 and S17. May interact with IF1 in the 30S initiation complex.

Functionally, with S4 and S5 plays an important role in translational accuracy. Its function is as follows. Interacts with and stabilizes bases of the 16S rRNA that are involved in tRNA selection in the A site and with the mRNA backbone. Located at the interface of the 30S and 50S subunits, it traverses the body of the 30S subunit contacting proteins on the other side and probably holding the rRNA structure together. The combined cluster of proteins S8, S12 and S17 appears to hold together the shoulder and platform of the 30S subunit. This chain is Small ribosomal subunit protein uS12 (rpsL), found in Synechococcus elongatus (strain ATCC 33912 / PCC 7942 / FACHB-805) (Anacystis nidulans R2).